The chain runs to 165 residues: Large ribosomal subunit protein uL10 (165 aa).

It belongs to the universal ribosomal protein uL10 family. As to quaternary structure, part of the ribosomal stalk of the 50S ribosomal subunit. The N-terminus interacts with L11 and the large rRNA to form the base of the stalk. The C-terminus forms an elongated spine to which L12 dimers bind in a sequential fashion forming a multimeric L10(L12)X complex.

In terms of biological role, forms part of the ribosomal stalk, playing a central role in the interaction of the ribosome with GTP-bound translation factors. The protein is Large ribosomal subunit protein uL10 of Burkholderia lata (strain ATCC 17760 / DSM 23089 / LMG 22485 / NCIMB 9086 / R18194 / 383).